We begin with the raw amino-acid sequence, 248 residues long: Ribonuclease PH (248 aa).

Residues arginine 86 and 124-126 (GTR) each bind phosphate.

Belongs to the RNase PH family. Homohexameric ring arranged as a trimer of dimers.

It catalyses the reaction tRNA(n+1) + phosphate = tRNA(n) + a ribonucleoside 5'-diphosphate. Phosphorolytic 3'-5' exoribonuclease that plays an important role in tRNA 3'-end maturation. Removes nucleotide residues following the 3'-CCA terminus of tRNAs; can also add nucleotides to the ends of RNA molecules by using nucleoside diphosphates as substrates, but this may not be physiologically important. Probably plays a role in initiation of 16S rRNA degradation (leading to ribosome degradation) during starvation. The polypeptide is Ribonuclease PH (Clostridium kluyveri (strain NBRC 12016)).